The following is a 447-amino-acid chain: Phospholipase A(1) LCAT3 (447 aa).

Catalysis depends on Ser-177, which acts as the Acyl-ester intermediate. Catalysis depends on charge relay system residues Asp-384 and His-409.

It belongs to the AB hydrolase superfamily. Lipase family.

Its subcellular location is the microsome membrane. The catalysed reaction is a 1,2-diacyl-sn-glycero-3-phosphocholine + H2O = a 2-acyl-sn-glycero-3-phosphocholine + a fatty acid + H(+). Its function is as follows. Hydrolyzes the sn-1 acylester bond of phospholipids. Phosphatidylcholine, phosphatidylethanolamine and phosphatidic acid can be used as substrates. Weak activity with lysophosphatidylcholine and no activity with tripalmitoylglycerol and cholesteryl oleate. Seems to have a preference for unsaturated fatty acids at the sn-1 position. In Arabidopsis thaliana (Mouse-ear cress), this protein is Phospholipase A(1) LCAT3 (LCAT3).